A 125-amino-acid polypeptide reads, in one-letter code: Glutamyl-tRNA(Gln) amidotransferase subunit C, mitochondrial (125 aa).

The protein belongs to the GatC family. As to quaternary structure, subunit of the heterotrimeric GatCAB amidotransferase (AdT) complex, composed of A, B and C subunits.

It localises to the mitochondrion. The enzyme catalyses L-glutamyl-tRNA(Gln) + L-glutamine + ATP + H2O = L-glutaminyl-tRNA(Gln) + L-glutamate + ADP + phosphate + H(+). In terms of biological role, allows the formation of correctly charged Gln-tRNA(Gln) through the transamidation of misacylated Glu-tRNA(Gln) in the mitochondria. The reaction takes place in the presence of glutamine and ATP through an activated gamma-phospho-Glu-tRNA(Gln). The polypeptide is Glutamyl-tRNA(Gln) amidotransferase subunit C, mitochondrial (Drosophila mojavensis (Fruit fly)).